The primary structure comprises 328 residues: 4-hydroxy-2-oxoglutarate aldolase, mitochondrial (328 aa).

The transit peptide at 1-26 directs the protein to the mitochondrion; that stretch reads MFGRTLFPARVIALGSGLFRTPLRTL. 76-77 is a binding site for substrate; sequence SN. Catalysis depends on Lys-195, which acts as the Schiff-base intermediate with substrate. Positions 197 and 221 each coordinate substrate.

The protein belongs to the DapA family. Homotetramer.

The protein resides in the mitochondrion. It carries out the reaction (4S)-4-hydroxy-2-oxoglutarate = glyoxylate + pyruvate. The enzyme catalyses (4R)-4-hydroxy-2-oxoglutarate = glyoxylate + pyruvate. Its activity is regulated as follows. Inhibited by divalent cations. Catalyzes the final step in the metabolic pathway of hydroxyproline. This Xenopus tropicalis (Western clawed frog) protein is 4-hydroxy-2-oxoglutarate aldolase, mitochondrial (hoga1).